Reading from the N-terminus, the 115-residue chain is Ribonuclease P protein component (115 aa).

It belongs to the RnpA family. Consists of a catalytic RNA component (M1 or rnpB) and a protein subunit.

It carries out the reaction Endonucleolytic cleavage of RNA, removing 5'-extranucleotides from tRNA precursor.. Its function is as follows. RNaseP catalyzes the removal of the 5'-leader sequence from pre-tRNA to produce the mature 5'-terminus. It can also cleave other RNA substrates such as 4.5S RNA. The protein component plays an auxiliary but essential role in vivo by binding to the 5'-leader sequence and broadening the substrate specificity of the ribozyme. In Natranaerobius thermophilus (strain ATCC BAA-1301 / DSM 18059 / JW/NM-WN-LF), this protein is Ribonuclease P protein component.